The primary structure comprises 278 residues: Sulfur carrier protein FdhD (278 aa).

The Cysteine persulfide intermediate role is filled by cysteine 121. 260–265 (FCKPGR) is a Mo-bis(molybdopterin guanine dinucleotide) binding site.

It belongs to the FdhD family.

The protein resides in the cytoplasm. Required for formate dehydrogenase (FDH) activity. Acts as a sulfur carrier protein that transfers sulfur from IscS to the molybdenum cofactor prior to its insertion into FDH. The polypeptide is Sulfur carrier protein FdhD (Salmonella newport (strain SL254)).